We begin with the raw amino-acid sequence, 1530 residues long: Glutamate-rich protein 3 (1530 aa).

9 disordered regions span residues 165-187 (RLQPLPSNPAVETVPKVTSRSRS), 408-429 (SLPKSRKEKSTEKGEELKKAEG), 475-661 (MTSK…PMPI), 673-724 (TEKG…GLEE), 773-870 (EAME…AVGL), 923-1146 (REAA…LLGE), 1167-1334 (LENI…GMGG), 1360-1383 (LAGSETAEEKTIANKASSFSDVAE), and 1425-1530 (YTTE…NVQV). Composition is skewed to basic and acidic residues over residues 415-429 (EKSTEKGEELKKAEG), 531-545 (LDDKKDNLDPEKESE), and 552-562 (PDARDNVKDEN). Over residues 563-574 (DGCSESELEEDK) the composition is skewed to acidic residues. The segment covering 581 to 592 (SSTSSRSHPYSS) has biased composition (low complexity). A compositionally biased stretch (basic and acidic residues) spans 600–616 (VGDREAHTDSSTDESAR). Positions 638–647 (ESLEIEIEDQ) are enriched in acidic residues. Basic and acidic residues-rich tracts occupy residues 684 to 717 (LSEKSGKHVSAEEKEKDKSKLWEESTAQVKDKKA) and 773 to 787 (EAMEEDEAPQHRDAD). Over residues 834–845 (GIERGAEGAAEA) the composition is skewed to low complexity. The segment covering 943–958 (GESEEEASIDLEDTGP) has biased composition (acidic residues). Composition is skewed to basic and acidic residues over residues 979 to 992 (EPAKERKEVMRTET), 1039 to 1116 (EANR…EETK), and 1173 to 1212 (LRKEGGGERLSEARDTEHKDREELSSRENRALKEGHRQDG). The span at 1213 to 1225 (EGALAAPEAEPAG) shows a compositional bias: low complexity. Over residues 1289-1300 (AVDEDPEEEEDK) the composition is skewed to acidic residues. Composition is skewed to basic and acidic residues over residues 1464–1487 (GRQETGAAEKFRLGLSREGERELS) and 1502–1511 (DFTETREKQQ). A compositionally biased stretch (polar residues) spans 1517 to 1530 (ESETADVSPNNVQV).

In terms of assembly, interacts with CLTC/clathrin heavy chain 1, AP2A2/AP-2 complex subunit alpha-2, and PIK3C2A/phosphatidylinositol 4-phosphate 3-kinase C2 domain-containing subunit alpha. As to expression, expressed in dopaminergic and serotoninergic neurons.

The protein resides in the cell projection. The protein localises to the cilium. Its subcellular location is the cytoplasm. Its function is as follows. Component of the primary cilium that controls cilium formation and length. May function within retrograde intraflagellar transport (IFT)-associated pathways to remove signaling proteins from primary cilia. Also involved in neuronal vesicle biogenesis and neurotransmitter vesicular function. The chain is Glutamate-rich protein 3 from Homo sapiens (Human).